The sequence spans 160 residues: Transcription antitermination protein NusB (160 aa).

This sequence belongs to the NusB family.

In terms of biological role, involved in transcription antitermination. Required for transcription of ribosomal RNA (rRNA) genes. Binds specifically to the boxA antiterminator sequence of the ribosomal RNA (rrn) operons. The chain is Transcription antitermination protein NusB from Rhizobium leguminosarum bv. trifolii (strain WSM2304).